Consider the following 350-residue polypeptide: tRNA uridine(34) hydroxylase (350 aa).

The Rhodanese domain maps to 146 to 240; the sequence is DDPDAVFIDM…YARRAREQGL (95 aa). Cysteine 200 functions as the Cysteine persulfide intermediate in the catalytic mechanism. Residues 319 to 328 show a composition bias toward basic and acidic residues; that stretch reads RRRRAGRENG. The interval 319–350 is disordered; the sequence is RRRRAGRENGNKIFNKSRGRLNSKLSIPDPAE.

This sequence belongs to the TrhO family.

The catalysed reaction is uridine(34) in tRNA + AH2 + O2 = 5-hydroxyuridine(34) in tRNA + A + H2O. Its function is as follows. Catalyzes oxygen-dependent 5-hydroxyuridine (ho5U) modification at position 34 in tRNAs. The sequence is that of tRNA uridine(34) hydroxylase from Salmonella typhi.